We begin with the raw amino-acid sequence, 113 residues long: UPF0122 protein LCA_0713 (113 aa).

This sequence belongs to the UPF0122 family.

Functionally, might take part in the signal recognition particle (SRP) pathway. This is inferred from the conservation of its genetic proximity to ftsY/ffh. May be a regulatory protein. This chain is UPF0122 protein LCA_0713, found in Latilactobacillus sakei subsp. sakei (strain 23K) (Lactobacillus sakei subsp. sakei).